Here is a 321-residue protein sequence, read N- to C-terminus: D-alanine--D-alanine ligase (321 aa).

Positions 121–315 constitute an ATP-grasp domain; the sequence is RSWFLTNNIN…FTNLIEEIIK (195 aa). Position 147–199 (147–199) interacts with ATP; the sequence is PVKRPYVIKPLTQGSSIGVEVIFEEDDFNFADYNFPYGYQVIIEQYIKGRELQ. Mg(2+) contacts are provided by E268, E282, and N284.

The protein belongs to the D-alanine--D-alanine ligase family. Mg(2+) is required as a cofactor. It depends on Mn(2+) as a cofactor.

The protein localises to the cytoplasm. The catalysed reaction is 2 D-alanine + ATP = D-alanyl-D-alanine + ADP + phosphate + H(+). It functions in the pathway cell wall biogenesis; peptidoglycan biosynthesis. Functionally, cell wall formation. In Rickettsia felis (strain ATCC VR-1525 / URRWXCal2) (Rickettsia azadi), this protein is D-alanine--D-alanine ligase.